Consider the following 142-residue polypeptide: Transcription antitermination protein NusB (142 aa).

It belongs to the NusB family.

Functionally, involved in transcription antitermination. Required for transcription of ribosomal RNA (rRNA) genes. Binds specifically to the boxA antiterminator sequence of the ribosomal RNA (rrn) operons. This is Transcription antitermination protein NusB from Streptomyces coelicolor (strain ATCC BAA-471 / A3(2) / M145).